Reading from the N-terminus, the 1173-residue chain is RNA polymerase-associated protein CTR9 homolog (1173 aa).

TPR repeat units follow at residues 41-75 (LHIWIALALEYYKQGKTEEFVKLLEAARIDGNLDY), 129-162 (NHLLGRACFCLLEGDKMDQADAQFHFVLNQSPNN), 163-196 (IPALLGKACISFNKKDYRGALAYYKKALRTNPGC), 198-231 (AEVRLGMGHCFVKLNKLEKARLAFSRALELNSKC), 235-268 (LVGLAVLELNNKEADSIKNGVQLLSRAYTIDPSN), 306-339 (AESCYQLARSFHVQEDYDQAFQYYYQATQFASSS), 341-374 (VLPFFGLGQMYIYRGDKENASQCFEKVLKAYPNN), 412-444 (VEAWIELAQILEQTDIQGALSAYGTATRILQEK), 451-484 (PEILNNVGALHFRLGNLGEAKKYFLASLDRAKAE), 497-530 (VTTSYNLARLYEAMCEFHEAEKLYKNILREHPNY), 531-564 (VDCYLRLGAMARDKGNFYEASDWFKEALQINQDH), 566-598 (DAWSLIGNLHLAKQEWGPGQKKFERILKQPSTQ), 613-646 (QTLHQPTRDREKEKRHQDRALAIYKQVLRNDAKN), 647-680 (LYAANGIGAVLAHKGYFREARDVFAQVREATADI), 681-714 (SDVWLNLAHIYVEQKQYISAVQMYENCLRKFYKH), and 717-750 (TEVVLYLARALFKCGKLQECKQTLLKARHVAPSD). The disordered stretch occupies residues 892–1173 (TGETEATKEK…GSEHGSDDSD (282 aa)). Basic residues predominate over residues 900 to 912 (EKKRGGGGGRRSK). Residues 917-929 (FDEFVNDDTDDDL) show a composition bias toward acidic residues. Threonine 925 carries the post-translational modification Phosphothreonine. Phosphoserine is present on residues serine 932, serine 941, and serine 943. Residues 955 to 964 (RKKKKRRRHP) are compositionally biased toward basic residues. Position 970 is a phosphoserine (serine 970). The segment covering 980 to 994 (KPKKRRPPKAEKKKA) has biased composition (basic residues). Serine 1020 and serine 1021 each carry phosphoserine. Residues 1023 to 1034 (EDKLKIADEGHP) show a composition bias toward basic and acidic residues. 8 positions are modified to phosphoserine: serine 1039, serine 1041, serine 1043, serine 1081, serine 1085, serine 1087, serine 1097, and serine 1102. Residues 1098–1128 (GSEQSDNESVQSGRSHSGVSENDSRPASPSA) are compositionally biased toward polar residues. The segment covering 1129–1139 (ESDHESERGSD) has biased composition (basic and acidic residues). Over residues 1148-1159 (GNESEPEGSNNE) the composition is skewed to low complexity. The segment covering 1160 to 1173 (ASDRGSEHGSDDSD) has biased composition (basic and acidic residues).

As to quaternary structure, component of the PAF1 complex, which consists of CDC73, PAF1, LEO1, CTR9, RTF1 and SKIC8. The PAF1 complex interacts with PHF5A. Interacts with KMT2A/MLL1. Interacts with STAT3. Interacts with SETD5. Interacts with ERCC6. In terms of assembly, (Microbial infection) The PAF1 complex interacts with Zika virus French Polynesia 10087PF/2013 non-structural protein 5/NS5. The interaction with viral NS5 proteins may reduce the antiviral immune response by inhibiting the recruitment of the PAF1 complex to interferon-stimulated genes, thus preventing their transcription. (Microbial infection) The PAF1 complex interacts with Dengue virus DENV2 16681 non-structural protein 5/NS5. The PAF1 complex interacts with Dengue virus DENV4 Dominica/814669/1981 non-structural protein 5/NS5. The interaction with viral NS5 proteins may reduce the antiviral immune response by inhibiting the recruitment of the PAF1 complex to interferon-stimulated genes, thus preventing their transcription. Widely expressed.

The protein localises to the nucleus speckle. In terms of biological role, component of the PAF1 complex (PAF1C) which has multiple functions during transcription by RNA polymerase II and is implicated in regulation of development and maintenance of embryonic stem cell pluripotency. PAF1C associates with RNA polymerase II through interaction with POLR2A CTD non-phosphorylated and 'Ser-2'- and 'Ser-5'-phosphorylated forms and is involved in transcriptional elongation, acting both independently and synergistically with TCEA1 and in cooperation with the DSIF complex and HTATSF1. PAF1C is required for transcription of Hox and Wnt target genes. PAF1C is involved in hematopoiesis and stimulates transcriptional activity of KMT2A/MLL1; it promotes leukemogenesis through association with KMT2A/MLL1-rearranged oncoproteins, such as KMT2A/MLL1-MLLT3/AF9 and KMT2A/MLL1-MLLT1/ENL. PAF1C is involved in histone modifications such as ubiquitination of histone H2B and methylation on histone H3 'Lys-4' (H3K4me3). PAF1C recruits the RNF20/40 E3 ubiquitin-protein ligase complex and the E2 enzyme UBE2A or UBE2B to chromatin which mediate monoubiquitination of 'Lys-120' of histone H2B (H2BK120ub1); UB2A/B-mediated H2B ubiquitination is proposed to be coupled to transcription. PAF1C is involved in mRNA 3' end formation probably through association with cleavage and poly(A) factors. In case of infection by influenza A strain H3N2, PAF1C associates with viral NS1 protein, thereby regulating gene transcription. Required for mono- and trimethylation on histone H3 'Lys-4' (H3K4me3) and dimethylation on histone H3 'Lys-79' (H3K4me3). Required for Hox gene transcription. Required for the trimethylation of histone H3 'Lys-4' (H3K4me3) on genes involved in stem cell pluripotency; this function is synergistic with CXXC1 indicative for an involvement of the SET1 complex. Involved in transcriptional regulation of IL6-responsive genes and in JAK-STAT pathway; may regulate DNA-association of STAT3. In Homo sapiens (Human), this protein is RNA polymerase-associated protein CTR9 homolog (CTR9).